The sequence spans 149 residues: Protein FAM72A (149 aa).

It belongs to the FAM72 family. In terms of assembly, interacts with UNG. As to expression, expressed at high levels in stomach and also in kidney and, at low levels, in heart (at protein level). In the stomach, highly expressed in foveolar cells, parietal cells and chief cells (at protein level). In kidney, expressed in endothelial cells, mesangial and epithelial cells (parietal and visceral epithelium) around glomerulus (at protein level).

It localises to the cytoplasm. The protein resides in the mitochondrion. Its function is as follows. May play a role in the regulation of cellular reactive oxygen species metabolism. May participate in cell growth regulation. This Bos taurus (Bovine) protein is Protein FAM72A (FAM72A).